The chain runs to 473 residues: Ribulose bisphosphate carboxylase large chain (473 aa).

Substrate is bound by residues N116 and T166. The active-site Proton acceptor is K168. Substrate is bound at residue K170. Mg(2+)-binding residues include K194, D196, and E197. The residue at position 194 (K194) is an N6-carboxylysine. Residue H287 is the Proton acceptor of the active site. Substrate-binding residues include R288, H320, and S372.

The protein belongs to the RuBisCO large chain family. Type I subfamily. Heterohexadecamer of 8 large chains and 8 small chains. Mg(2+) is required as a cofactor.

The catalysed reaction is 2 (2R)-3-phosphoglycerate + 2 H(+) = D-ribulose 1,5-bisphosphate + CO2 + H2O. It catalyses the reaction D-ribulose 1,5-bisphosphate + O2 = 2-phosphoglycolate + (2R)-3-phosphoglycerate + 2 H(+). Functionally, ruBisCO catalyzes two reactions: the carboxylation of D-ribulose 1,5-bisphosphate, the primary event in carbon dioxide fixation, as well as the oxidative fragmentation of the pentose substrate. Both reactions occur simultaneously and in competition at the same active site. This chain is Ribulose bisphosphate carboxylase large chain, found in Hydrogenophaga pseudoflava (Pseudomonas carboxydoflava).